A 472-amino-acid polypeptide reads, in one-letter code: FAD-dependent monooxygenase ltmM (472 aa).

The chain crosses the membrane as a helical span at residues 7–27; sequence VIIVGGSVAGLSLAHCLEKIG. 3 residues coordinate FAD: glutamate 34, glycine 48, and arginine 107. Asparagine 186 carries an N-linked (GlcNAc...) asparagine glycan. FAD-binding residues include aspartate 306 and alanine 319. The helical transmembrane segment at 450-470 threads the bilayer; it reads IVYALYLVAAAAFILYCLSSL.

Belongs to the paxM FAD-dependent monooxygenase family. The cofactor is FAD.

The protein localises to the membrane. Its pathway is secondary metabolite biosynthesis. FAD-dependent monooxygenase; part of the gene cluster that mediates the biosynthesis of lolitrems, indole-diterpene mycotoxins that are potent tremorgens in mammals, and are synthesized by clavicipitaceous fungal endophytes in association with their grass hosts. The geranylgeranyl diphosphate (GGPP) synthase ltmG is proposed to catalyze the first step in lolitrem biosynthesis. LtmG catalyzes a series of iterative condensations of isopentenyl diphosphate (IPP) with dimethylallyl diphosphate (DMAPP), geranyl diphosphate (GPP), and farnesyl diphosphate (FPP), to form GGPP. GGPP then condenses with indole-3-glycerol phosphate to form 3-geranylgeranylindole, an acyclic intermediate, to be incorporated into paxilline. Either ltmG or ltmC could be responsible for this step, as both are putative prenyl transferases. The FAD-dependent monooxygenase ltmM then catalyzes the epoxidation of the two terminal alkenes of the geranylgeranyl moiety, which is subsequently cyclized by ltmC, to paspaline. The cytochrome P450 monooxygenases ltmQ and ltmP can sequentially oxidize paspaline to terpendole E and terpendole F. Alternatively, ltmP converts paspaline to an intermediate which is oxidized by ltmQ to terpendole F. LtmF, ltmK, ltmE and ltmJ appear to be unique to the epichloe endophytes. The prenyltransferase ltmF is involved in the 27-hydroxyl-O-prenylation. The cytochrome P450 monooxygenase ltmK is required for the oxidative acetal ring formation. The multi-functional prenyltransferase ltmE is required for C20- and C21-prenylations of the indole ring of paspalanes and acts together with the cytochrome P450 monooxygenase ltmJ to yield lolitremanes by multiple oxidations and ring closures. The stereoisomer pairs of lolitriol and lolitrem N or lolitrem B and lolitrem F may be attributed to variations in the way in which ring closure can occur under the action of ltmJ. While the major product of this pathway is lolitrem B, the prenyl transferases and cytochrome P450 monooxygenases identified in this pathway have a remarkable versatility in their regio- and stereo-specificities to generate a diverse range of metabolites that are products of a metabolic grid rather than a linear pathway. In Epichloe festucae (strain Fl1), this protein is FAD-dependent monooxygenase ltmM (ltmM).